The primary structure comprises 190 residues: MVLVLALGDLHVPHRAADLPPKFKSMLVPGKIQHIICTGNLCIKEIHDYLKTICPDLHIVRGEFDEDARYPENKTLTIGQFKLGLCHGHQVIPWGDLDSLAMLQRQLGVDILVTGHTHQFTAYKHEGGVVINPGSATGAYSSINQDVNPSFVLMDIDGFRAVVYVYELIDGEVKVDKIEFKKPPTTSSGP.

This sequence belongs to the VPS29 family. In terms of assembly, component of the retromer complex which consists of VPS29 (MAG1), VPS26 (VPS26A or VPS26B), VPS35 (VPS35A or VPS35B or VPS35C), VPS5/17 (SNX1 or SNX2A or SNX2B). Component of a retromer subcomplex consisting of VPS29 (MAG1), VPS26 (VPS26A or VPS26B), VPS35 (VPS35A or VPS35B or VPS35C).

It is found in the cytoplasm. Its subcellular location is the endosome membrane. The protein resides in the prevacuolar compartment membrane. It localises to the golgi apparatus. The protein localises to the trans-Golgi network membrane. It is found in the late endosome membrane. Plays a role in vesicular protein sorting. Component of the membrane-associated retromer complex which is essential in endosome-to-Golgi retrograde transport. Required for the auxin-carrier protein PIN2 sorting to the lytic vacuolar pathway and the PIN1 recycling to the plasma membrane, thus influencing auxin transport orientation. Also involved in the efficient sorting of seed storage proteins globulin 12S and albumin 2S. The VPS29-VPS26-VPS35 subcomplex may be involved in recycling of specific cargos from endosome to the plasma membrane. This Arabidopsis thaliana (Mouse-ear cress) protein is Vacuolar protein sorting-associated protein 29.